The chain runs to 157 residues: Arginine repressor (157 aa).

Belongs to the ArgR family.

Its subcellular location is the cytoplasm. The protein operates within amino-acid biosynthesis; L-arginine biosynthesis [regulation]. Functionally, regulates arginine biosynthesis genes. The sequence is that of Arginine repressor from Bacteroides thetaiotaomicron (strain ATCC 29148 / DSM 2079 / JCM 5827 / CCUG 10774 / NCTC 10582 / VPI-5482 / E50).